The following is a 351-amino-acid chain: Phosphate acyltransferase (351 aa).

The protein belongs to the PlsX family. In terms of assembly, homodimer. Probably interacts with PlsY.

Its subcellular location is the cytoplasm. The catalysed reaction is a fatty acyl-[ACP] + phosphate = an acyl phosphate + holo-[ACP]. Its pathway is lipid metabolism; phospholipid metabolism. Catalyzes the reversible formation of acyl-phosphate (acyl-PO(4)) from acyl-[acyl-carrier-protein] (acyl-ACP). This enzyme utilizes acyl-ACP as fatty acyl donor, but not acyl-CoA. In Verminephrobacter eiseniae (strain EF01-2), this protein is Phosphate acyltransferase.